Consider the following 3380-residue polypeptide: Apolipophorins (3380 aa).

Residues 1 to 21 (MGTPPHIWFLLILAISSGGLS) form the signal peptide. In terms of domain architecture, Vitellogenin spans 40–646 (YQKGQTYTYS…SQSSYLPRSV (607 aa)). N-linked (GlcNAc...) asparagine glycans are attached at residues N132, N649, N969, N2174, N2851, and N3177. Positions 2815–2979 (ATAILLNSHH…NAWKVDAQCA (165 aa)) constitute a VWFD domain. C2839 and C2978 form a disulfide bridge.

Post-translationally, cleaved into 2 chains by furin protease. However, prevention of cleavage does not impair its function. In terms of processing, N-glycosylated. In terms of tissue distribution, present in brain, hemolymph, fat body and eyes.

It localises to the secreted. Constitutes the major component of lipophorin, which mediates transport for various types of lipids in hemolymph. Acts by forming lipoprotein particles that bind lipoproteins and lipids. May be required for morphogens wingless (wg) and hedgehog (hh) function, possibly by acting as vehicles for the movement of wg and hh. This chain is Apolipophorins, found in Locusta migratoria (Migratory locust).